The following is a 509-amino-acid chain: MAVKAPWLGFLLLVSLWGLSTPALLLRRLREHIQKFQESSSLHPGFGLGHGPGAVPKQGWLEQPLDPFNASDRRTFLQRYWVNDQHRTGQDVPVFLHIGGEGSLGPGSVMAGHPAALAPAWGALVISLEHRFYGLSMPAGGLDLALLRYLSSRHALADVASARQALSGLLNVSSSSPWICFGGSYAGSLATWARLKFPHLVFAAVASSAPLSAVVDFSAYNQVVARSLTQVAIGGSLECLAAASTAFTEVERLLRAGPAAQAVLREELGACGSLDLTEDQAELLGALQALVGGTVQYDGQAGAPLSVRQLCGLLLGKWGNRSRSTPYLGLRRAVQIVLRSMGQKCLSFSRAETVAQLSNTEPQVSGVGDRQWLYQTCTEFGFYVTCEGLQCPFSQLPALPFQLELCEQVFGLSPASVAQAVAQTNSYYGGQSPGATQVLFVNGDTDPWHVLSVTQDLGLSEPALLIPSASHCFDMAPMRPSDSPSLRLGRQKISQQLQDWLKDIKKSQS.

Residues 1–22 form the signal peptide; the sequence is MAVKAPWLGFLLLVSLWGLSTP. N-linked (GlcNAc...) asparagine glycans are attached at residues asparagine 69 and asparagine 171. Serine 184 functions as the Charge relay system in the catalytic mechanism. Residue asparagine 320 is glycosylated (N-linked (GlcNAc...) asparagine). Catalysis depends on charge relay system residues aspartate 446 and histidine 471.

It belongs to the peptidase S28 family. As to expression, expressed predominantly in cortical thymic epithelial cells, with highest expression around vessels and the thymic capsule.

It localises to the cytoplasmic vesicle. Its function is as follows. Protease that may play a role in T-cell development. The chain is Thymus-specific serine protease (Prss16) from Mus musculus (Mouse).